Consider the following 273-residue polypeptide: Chondrolectin (273 aa).

The N-terminal stretch at 1-21 is a signal peptide; sequence MSRVVSLLLGAALLCGHGAFC. Residues 22–216 are Extracellular-facing; that stretch reads RRVVSGQKVC…VVTEAGIIPN (195 aa). The 145-residue stretch at 35-179 folds into the C-type lectin domain; sequence FKHPCYKMAY…CNMKHNYICK (145 aa). 2 cysteine pairs are disulfide-bonded: cysteine 61/cysteine 178 and cysteine 144/cysteine 170. The N-linked (GlcNAc...) asparagine glycan is linked to asparagine 86. A helical transmembrane segment spans residues 217–237; that stretch reads LIYVVIPTIPLLLLILVAFGT. Topologically, residues 238–273 are cytoplasmic; it reads CCFQMLHKSKGRTKTSPNQSTLWISKSTRKESGMEV. The interval 248–273 is disordered; sequence GRTKTSPNQSTLWISKSTRKESGMEV. The segment covering 251–263 has biased composition (polar residues); sequence KTSPNQSTLWISK.

As to quaternary structure, interacts with RABGGTB. Post-translationally, N-glycosylated. As to expression, found in spleen, testis, prostate and fetal liver. Expression limited to vascular muscle of testis, smooth muscle of prostate stroma, heart muscle, skeletal muscle, crypts of small intestine, and red pulp of spleen. B lymphocytes express isoform 2 only; peripheral blood T lymphocytes express isoform 3 only; granulocytes and monocytes express neither isoform 2 nor isoform 3. During development of T lymphocytes, bone marrow progenitor cells express isoform 2 only; thymocytes at different stages of maturation express predominantly isoform 2 and weakly isoform 3, and mature thymocytes express only isoform 2.

It is found in the cytoplasm. The protein localises to the membrane. The protein resides in the endoplasmic reticulum. Its subcellular location is the endoplasmic reticulum membrane. May play a role in the development of the nervous system such as in neurite outgrowth and elongation. May be involved in motor axon growth and guidance. The sequence is that of Chondrolectin (CHODL) from Homo sapiens (Human).